A 159-amino-acid polypeptide reads, in one-letter code: 2-C-methyl-D-erythritol 2,4-cyclodiphosphate synthase (159 aa).

2 residues coordinate a divalent metal cation: Asp-10 and His-12. Residues 10-12 and 37-38 contribute to the 4-CDP-2-C-methyl-D-erythritol 2-phosphate site; these read DVH and HS. His-45 is a binding site for a divalent metal cation. Residues 59-61, 64-68, 103-109, 135-138, Phe-142, and Arg-145 contribute to the 4-CDP-2-C-methyl-D-erythritol 2-phosphate site; these read DIG, FLDTD, AQAPKML, and TTTE.

Belongs to the IspF family. In terms of assembly, homotrimer. Requires a divalent metal cation as cofactor.

The enzyme catalyses 4-CDP-2-C-methyl-D-erythritol 2-phosphate = 2-C-methyl-D-erythritol 2,4-cyclic diphosphate + CMP. It functions in the pathway isoprenoid biosynthesis; isopentenyl diphosphate biosynthesis via DXP pathway; isopentenyl diphosphate from 1-deoxy-D-xylulose 5-phosphate: step 4/6. Involved in the biosynthesis of isopentenyl diphosphate (IPP) and dimethylallyl diphosphate (DMAPP), two major building blocks of isoprenoid compounds. Catalyzes the conversion of 4-diphosphocytidyl-2-C-methyl-D-erythritol 2-phosphate (CDP-ME2P) to 2-C-methyl-D-erythritol 2,4-cyclodiphosphate (ME-CPP) with a corresponding release of cytidine 5-monophosphate (CMP). This is 2-C-methyl-D-erythritol 2,4-cyclodiphosphate synthase from Francisella tularensis subsp. holarctica (strain OSU18).